A 179-amino-acid chain; its full sequence is M-zodatoxin-Lt4b (179 aa).

Residues 1–22 (MKFSIIALALAVAFVCVAESRS) form the signal peptide. A propeptide spanning residues 23-43 (EEEGYDVSEEIQAEELEEAAR) is cleaved from the precursor. The short motif at 40-43 (EAAR) is the Processing quadruplet motif 1 element. Q61 is subject to Glutamine amide. The Inverted processing quadruplet motif 1 motif lies at 63–66 (REDS). The propeptide occupies 63 to 71 (REDSEDAGR). The short motif at 68–71 (DAGR) is the Processing quadruplet motif 2 element. Q89 is subject to Glutamine amide. The Inverted processing quadruplet motif 2 signature appears at 91–94 (REDT). A propeptide spanning residues 91-99 (REDTEEAGR) is cleaved from the precursor. Positions 96 to 99 (EAGR) match the Processing quadruplet motif 3 motif. Q117 carries the glutamine amide modification. An Inverted processing quadruplet motif 3 motif is present at residues 119–122 (REDS). Positions 119–127 (REDSEEAGR) are excised as a propeptide. Positions 124 to 127 (EAGR) match the Processing quadruplet motif 4 motif. Q145 is subject to Glutamine amide. The Inverted processing quadruplet motif 4 motif lies at 147 to 150 (REDT). A propeptide spanning residues 147–154 (REDTEEAR) is cleaved from the precursor. The Processing quadruplet motif 5 motif lies at 151–154 (EEAR). Position 178 is a phenylalanine amide (F178).

This sequence belongs to the cationic peptide 03 (latarcin) family. 04 subfamily. Cleavage of the propeptide depends on the processing quadruplet motif (PQM) (XXXR, with at least one of X being E) and the inverted PQM (RXXX, with at least one of X being E). As to expression, expressed by the venom gland.

The protein resides in the secreted. Its function is as follows. M-zodatoxin-Lt4b: Has antimicrobial activity against Gram-positive bacteria (A.globiformis VKM Ac-1112 (MIC=0.3 uM), and B.subtilis VKM B-501 (MIC=1.1 uM)), Gram-negative bacteria (E.coli DH5-alpha (MIC=4.4 uM), E.coli MH1 (MIC=4.4 uM), and P.aeruginosa PAO1 (MIC=&gt;35 uM)), and yeasts (P.pastoris GS115 (MIC=&gt;35 uM), and S.cerevisiae Y190 (MIC=35 uM)). Does not have hemolytic activity against rabbit erythrocytes. Causes paralysis, but is not lethal when injected into insect (M.domestica) larvae. In terms of biological role, shows no antimicrobial activity against Gram-positive bacterium B.subtilis B-501 or Gram-negative bacterium E.coli DH5-alpha at concentration up to 20 uM. This is M-zodatoxin-Lt4b from Lachesana tarabaevi (Spider).